A 267-amino-acid chain; its full sequence is 4-hydroxy-tetrahydrodipicolinate reductase (267 aa).

NAD(+) contacts are provided by residues 12–17 (GPRGRM), 100–102 (GTT), and 126–129 (APNF). Histidine 156 functions as the Proton donor/acceptor in the catalytic mechanism. Histidine 157 is a binding site for (S)-2,3,4,5-tetrahydrodipicolinate. The active-site Proton donor is lysine 160. A (S)-2,3,4,5-tetrahydrodipicolinate-binding site is contributed by 166-167 (GT).

It belongs to the DapB family.

It is found in the cytoplasm. It carries out the reaction (S)-2,3,4,5-tetrahydrodipicolinate + NAD(+) + H2O = (2S,4S)-4-hydroxy-2,3,4,5-tetrahydrodipicolinate + NADH + H(+). The catalysed reaction is (S)-2,3,4,5-tetrahydrodipicolinate + NADP(+) + H2O = (2S,4S)-4-hydroxy-2,3,4,5-tetrahydrodipicolinate + NADPH + H(+). It participates in amino-acid biosynthesis; L-lysine biosynthesis via DAP pathway; (S)-tetrahydrodipicolinate from L-aspartate: step 4/4. Functionally, catalyzes the conversion of 4-hydroxy-tetrahydrodipicolinate (HTPA) to tetrahydrodipicolinate. This is 4-hydroxy-tetrahydrodipicolinate reductase from Bacillus licheniformis (strain ATCC 14580 / DSM 13 / JCM 2505 / CCUG 7422 / NBRC 12200 / NCIMB 9375 / NCTC 10341 / NRRL NRS-1264 / Gibson 46).